The primary structure comprises 199 residues: Ras-related protein Rab-7b (199 aa).

Residues 15–22, 34–40, 63–67, 124–127, and 154–155 each bind GTP; these read GAIGVGKT, YEEYQTT, DTGGQ, NKID, and AK. 2 short sequence motifs (switch) span residues 28–41 and 67–82; these read YVHK…QTTL and QERF…KGSD. Residue Ser186 is modified to Phosphoserine. S-geranylgeranyl cysteine attachment occurs at residues Cys198 and Cys199.

This sequence belongs to the small GTPase superfamily. Rab family. In terms of tissue distribution, expressed in heart, placenta, lung, skeletal muscle and peripheral blood leukocyte.

Its subcellular location is the late endosome. It localises to the lysosome. The protein resides in the golgi apparatus. It is found in the trans-Golgi network. The protein localises to the cytoplasmic vesicle. Its subcellular location is the phagosome. It localises to the phagosome membrane. Its function is as follows. Controls vesicular trafficking from endosomes to the trans-Golgi network (TGN). Acts as a negative regulator of TLR9 signaling and can suppress TLR9-triggered TNFA, IL6, and IFNB production in macrophages by promoting TLR9 lysosomal degradation. Also negatively regulates TLR4 signaling in macrophages by promoting lysosomal degradation of TLR4. Promotes megakaryocytic differentiation by increasing NF-kappa-B-dependent IL6 production and subsequently enhancing the association of STAT3 with GATA1. Not involved in the regulation of the EGF- and EGFR degradation pathway. The chain is Ras-related protein Rab-7b (RAB7B) from Homo sapiens (Human).